A 738-amino-acid polypeptide reads, in one-letter code: Integrin beta-2-like protein (738 aa).

The first 22 residues, 1-22 (MLGQCTLLPVLAGLLSLESALS), serve as a signal peptide directing secretion. At 23–671 (QLCTKDNVST…LVCAEISNTT (649 aa)) the chain is on the extracellular side. The PSI domain maps to 24–74 (LCTKDNVSTCQDCIRSGPSCAWCQKLNFTGRGEPDSVRCDTPEQLLLKGCT). 23 disulfides stabilise this stretch: Cys25–Cys419, Cys33–Cys43, Cys36–Cys73, Cys46–Cys62, Cys218–Cys258, Cys358–Cys372, Cys421–Cys439, Cys431–Cys442, Cys444–Cys453, Cys455–Cys486, Cys469–Cys484, Cys478–Cys489, Cys491–Cys506, Cys508–Cys531, Cys513–Cys529, Cys521–Cys534, Cys536–Cys545, Cys547–Cys570, Cys554–Cys568, Cys562–Cys573, Cys575–Cys584, Cys594–Cys603, and Cys600–Cys664. Asn29 carries an N-linked (GlcNAc...) asparagine glycan. N-linked (GlcNAc...) asparagine glycosylation is found at Asn50, Asn102, Asn173, Asn226, Asn252, Asn342, Asn360, and Asn386. The region spanning 126–329 (SVDLYFLMGL…DSSNVAQLIR (204 aa)) is the VWFA domain. 4 consecutive I-EGF domains span residues 421–454 (CQEQ…KNCE), 455–507 (CQTQ…QYCE), 508–546 (CNNV…SACQ), and 547–585 (CRMS…PLCE). N-linked (GlcNAc...) asparagine glycosylation is present at Asn473. Asn627 and Asn669 each carry an N-linked (GlcNAc...) asparagine glycan. Residues 672-692 (ILLGVIVGVLLAVIFLLVYCM) form a helical membrane-spanning segment. Residues 693–738 (VYLKGTQKAAKLPRKGGAQSTLAQQPHFQEPHHVEPVWNQERQGTQ) are Cytoplasmic-facing. Positions 709-738 (GAQSTLAQQPHFQEPHHVEPVWNQERQGTQ) are disordered. Positions 710–719 (AQSTLAQQPH) are enriched in polar residues.

Belongs to the integrin beta chain family. As to quaternary structure, monomer and homodimer. Unlike integrin beta chains, no alpha chain partner has yet been found. In terms of processing, N-glycosylated. In terms of tissue distribution, expressed predominantly in maturing and mature neutrophils.

The protein localises to the cell membrane. During inflammatory stimulation, plays a role in retaining Cxcl13-expressing cells at the site of the inflammatory response. The protein is Integrin beta-2-like protein of Mus musculus (Mouse).